We begin with the raw amino-acid sequence, 205 residues long: Small ribosomal subunit protein uS4 (205 aa).

Positions 20–44 are disordered; it reads WGRPKSPVNRREYGPGQHGQRRKGK. Residues 94 to 154 form the S4 RNA-binding domain; it reads SRLDAIVYRS…ERSKQLLLVL (61 aa).

It belongs to the universal ribosomal protein uS4 family. As to quaternary structure, part of the 30S ribosomal subunit. Contacts protein S5. The interaction surface between S4 and S5 is involved in control of translational fidelity.

Functionally, one of the primary rRNA binding proteins, it binds directly to 16S rRNA where it nucleates assembly of the body of the 30S subunit. Its function is as follows. With S5 and S12 plays an important role in translational accuracy. The protein is Small ribosomal subunit protein uS4 of Bartonella bacilliformis (strain ATCC 35685 / KC583 / Herrer 020/F12,63).